We begin with the raw amino-acid sequence, 126 residues long: uncharacterized protein (126 aa).

The segment at 1 to 101 (MQASSEPANV…KSVGSQSADE (101 aa)) is disordered. 2 stretches are compositionally biased toward polar residues: residues 14–27 (GQNQ…STSP) and 86–99 (DTEA…SQSA).

This is an uncharacterized protein from Schizosaccharomyces pombe (strain 972 / ATCC 24843) (Fission yeast).